Consider the following 298-residue polypeptide: Methylsterol monooxygenase 1-1 (298 aa).

3 helical membrane-spanning segments follow: residues 42–62, 96–116, and 118–138; these read ILFL…VELA, FILV…MIEI, and SGLP…YFLI. Residues 132 to 267 form the Fatty acid hydroxylase domain; sequence LVVYFLIEDY…FTYCDYIYGT (136 aa). A Histidine box-1 motif is present at residues 147-151; sequence HRFFH. Residues 160 to 164 carry the Histidine box-2 motif; the sequence is HRVHH. Residues 189–209 traverse the membrane as a helical segment; sequence TFMGPAIAPGHMITFWLWIAL. The short motif at 239 to 245 is the Histidine box-3 element; it reads YHDYHHY.

This sequence belongs to the sterol desaturase family. In terms of assembly, interacts with ACBP1. Fe cation serves as cofactor. In terms of tissue distribution, expressed in rosettes, stems, roots, floral buds, flowers and siliques.

Its subcellular location is the endoplasmic reticulum membrane. It catalyses the reaction 4,4-dimethyl-5alpha-cholest-7-en-3beta-ol + 6 Fe(II)-[cytochrome b5] + 3 O2 + 5 H(+) = 4alpha-carboxy-4beta-methyl-5alpha-cholest-7-ene-3beta-ol + 6 Fe(III)-[cytochrome b5] + 4 H2O. It carries out the reaction 24-methylenecycloartanol + 6 Fe(II)-[cytochrome b5] + 3 O2 + 5 H(+) = 4alpha-carboxy-4beta,14alpha-dimethyl-9beta,19-cyclo-5alpha-ergost-24(24(1))-en-3beta-ol + 6 Fe(III)-[cytochrome b5] + 4 H2O. Functionally, non-heme iron oxygenase involved in sterols biosynthesis by catalyzing the removal of the first methyl group at the C-4 position. 4,4-dimethyl-9-beta,19-cyclopropylsterols such as 24-methylenecycloartanol are the preferred substrates. Acts as a rate-limiting enzyme in the sterol pathway via interaction with ACBP1; sterols serve as lipid modulators for gene expression of homeodomain-leucine zipper IV transcription factors. Together with SMO1-2, involved in the maintenance of sterol composition to balance auxin and cytokinin activities during embryogenesis. The polypeptide is Methylsterol monooxygenase 1-1 (Arabidopsis thaliana (Mouse-ear cress)).